Consider the following 302-residue polypeptide: MNVSVVTERRTPAYSSLAAGELNGLVARALLTEARLTPKPGLVDIRNSGAHRDMDLAAFERSTTAIAPWMEKFFIMGNNTAALAAENVLVMLRPLGMACENDMLQATNGVNTHRGAIFAFGLLSAAIGRLLARGEPLEQNRICDQVARLSRNIVAHELSAKKAGKLTKSETHFQCYGLSGARGEAESGFRTVRTQALPVFNRVVQEHDDTHLALLQTLLHLMAWNDDTNLVSRGGLEGLYYVQQQAQKLLWQGGVLVEGGIEAMQSLDDELILRNLSPGGSADLLAVTWFLSHFPAGSLYPE.

The protein belongs to the CitG/MdcB family.

It carries out the reaction 3'-dephospho-CoA + ATP = 2'-(5''-triphospho-alpha-D-ribosyl)-3'-dephospho-CoA + adenine. This chain is Probable 2-(5''-triphosphoribosyl)-3'-dephosphocoenzyme-A synthase 1, found in Salmonella typhimurium (strain LT2 / SGSC1412 / ATCC 700720).